The chain runs to 87 residues: Small ribosomal subunit protein eS21 (87 aa).

It belongs to the eukaryotic ribosomal protein eS21 family. Component of the small ribosomal subunit. Mature ribosomes consist of a small (40S) and a large (60S) subunit. The 40S subunit contains about 33 different proteins and 1 molecule of RNA (18S). The 60S subunit contains about 49 different proteins and 3 molecules of RNA (25S, 5.8S and 5S).

The protein resides in the cytoplasm. In terms of biological role, required for the processing of the 20S rRNA-precursor to mature 18S rRNA in a late step of the maturation of 40S ribosomal subunits. Has a physiological role leading to 18S rRNA stability. The chain is Small ribosomal subunit protein eS21 (RPS21) from Kluyveromyces lactis (strain ATCC 8585 / CBS 2359 / DSM 70799 / NBRC 1267 / NRRL Y-1140 / WM37) (Yeast).